The chain runs to 657 residues: tRNA 5-methylaminomethyl-2-thiouridine biosynthesis bifunctional protein MnmC (657 aa).

A tRNA (mnm(5)s(2)U34)-methyltransferase region spans residues 1-233; that stretch reads MPRGLILATP…KRDMTVAAFP (233 aa). Residues 256–657 are FAD-dependent cmnm(5)s(2)U34 oxidoreductase; sequence LGAGLAGCSV…RALRHGKHAA (402 aa).

The protein in the N-terminal section; belongs to the methyltransferase superfamily. tRNA (mnm(5)s(2)U34)-methyltransferase family. It in the C-terminal section; belongs to the DAO family. FAD serves as cofactor.

The protein localises to the cytoplasm. It carries out the reaction 5-aminomethyl-2-thiouridine(34) in tRNA + S-adenosyl-L-methionine = 5-methylaminomethyl-2-thiouridine(34) in tRNA + S-adenosyl-L-homocysteine + H(+). In terms of biological role, catalyzes the last two steps in the biosynthesis of 5-methylaminomethyl-2-thiouridine (mnm(5)s(2)U) at the wobble position (U34) in tRNA. Catalyzes the FAD-dependent demodification of cmnm(5)s(2)U34 to nm(5)s(2)U34, followed by the transfer of a methyl group from S-adenosyl-L-methionine to nm(5)s(2)U34, to form mnm(5)s(2)U34. This chain is tRNA 5-methylaminomethyl-2-thiouridine biosynthesis bifunctional protein MnmC, found in Ralstonia nicotianae (strain ATCC BAA-1114 / GMI1000) (Ralstonia solanacearum).